An 819-amino-acid polypeptide reads, in one-letter code: DNA mismatch repair protein MutS (819 aa).

ATP is bound at residue 596–603; sequence GPNMSGKS.

Belongs to the DNA mismatch repair MutS family.

In terms of biological role, this protein is involved in the repair of mismatches in DNA. It is possible that it carries out the mismatch recognition step. This protein has a weak ATPase activity. The polypeptide is DNA mismatch repair protein MutS (Thermosipho melanesiensis (strain DSM 12029 / CIP 104789 / BI429)).